The following is a 231-amino-acid chain: Phosphatidylserine decarboxylase proenzyme (231 aa).

Serine 200 acts as the Schiff-base intermediate with substrate; via pyruvic acid in catalysis. Serine 200 bears the Pyruvic acid (Ser); by autocatalysis mark.

Belongs to the phosphatidylserine decarboxylase family. PSD-A subfamily. In terms of assembly, heterodimer of a large membrane-associated beta subunit and a small pyruvoyl-containing alpha subunit. Pyruvate serves as cofactor. In terms of processing, is synthesized initially as an inactive proenzyme. Formation of the active enzyme involves a self-maturation process in which the active site pyruvoyl group is generated from an internal serine residue via an autocatalytic post-translational modification. Two non-identical subunits are generated from the proenzyme in this reaction, and the pyruvate is formed at the N-terminus of the alpha chain, which is derived from the carboxyl end of the proenzyme. The post-translation cleavage follows an unusual pathway, termed non-hydrolytic serinolysis, in which the side chain hydroxyl group of the serine supplies its oxygen atom to form the C-terminus of the beta chain, while the remainder of the serine residue undergoes an oxidative deamination to produce ammonia and the pyruvoyl prosthetic group on the alpha chain.

Its subcellular location is the cell membrane. It catalyses the reaction a 1,2-diacyl-sn-glycero-3-phospho-L-serine + H(+) = a 1,2-diacyl-sn-glycero-3-phosphoethanolamine + CO2. The protein operates within phospholipid metabolism; phosphatidylethanolamine biosynthesis; phosphatidylethanolamine from CDP-diacylglycerol: step 2/2. Its function is as follows. Catalyzes the formation of phosphatidylethanolamine (PtdEtn) from phosphatidylserine (PtdSer). The protein is Phosphatidylserine decarboxylase proenzyme of Mycobacterium tuberculosis (strain ATCC 25177 / H37Ra).